A 305-amino-acid polypeptide reads, in one-letter code: Axin interactor, dorsalization-associated protein A (305 aa).

An axin-binding region spans residues 153–220; that stretch reads GTLLPRLPSE…RKEDTYVHFN (68 aa). Residues 156–303 enclose the C2 Aida-type domain; the sequence is LPRLPSEPGM…LYLHLLQTLL (148 aa).

This sequence belongs to the AIDA family.

Acts as a ventralizing factor during embryogenesis. Inhibits axin-mediated JNK activation by binding axin and disrupting axin homodimerization. This in turn antagonizes a Wnt/beta-catenin-independent dorsalization pathway activated by axin/JNK-signaling. The polypeptide is Axin interactor, dorsalization-associated protein A (aida-a) (Xenopus laevis (African clawed frog)).